A 273-amino-acid chain; its full sequence is MTEISIATSVPSAMPPIGAQPDGPAKVTVRDLNFYYGQNHALKHINLALATNRVTAFIGPSGCGKSTLLRIFNRMYDLYPGQRAEGQVLLDNANILDPKLDLNLLRARVGMVFQKPTPFPMTIYENIAFGVRLYEKISKSEMDGRVEKALRGAALWNEVKDKLNASGLSLSGGQQQRLCIARTIAVRPEVILFDEPCSALDPISTAKIEELIDELKEQYTIAIVTHNMQQAARVSESTAFMYLGELIEFGPTNKIFTSPSDRRTQDYITGRFG.

Residues 27–268 (VTVRDLNFYY…PSDRRTQDYI (242 aa)) enclose the ABC transporter domain. Residue 59–66 (GPSGCGKS) participates in ATP binding.

The protein belongs to the ABC transporter superfamily. Phosphate importer (TC 3.A.1.7) family. In terms of assembly, the complex is composed of two ATP-binding proteins (PstB), two transmembrane proteins (PstC and PstA) and a solute-binding protein (PstS).

It is found in the cell inner membrane. It catalyses the reaction phosphate(out) + ATP + H2O = ADP + 2 phosphate(in) + H(+). Part of the ABC transporter complex PstSACB involved in phosphate import. Responsible for energy coupling to the transport system. This Rhodopseudomonas palustris (strain ATCC BAA-98 / CGA009) protein is Phosphate import ATP-binding protein PstB.